We begin with the raw amino-acid sequence, 105 residues long: Met repressor (105 aa).

The protein belongs to the MetJ family. In terms of assembly, homodimer.

It localises to the cytoplasm. Functionally, this regulatory protein, when combined with SAM (S-adenosylmethionine) represses the expression of the methionine regulon and of enzymes involved in SAM synthesis. In Serratia proteamaculans (strain 568), this protein is Met repressor.